The following is a 71-amino-acid chain: Keratin-associated protein 6-1 (71 aa).

This sequence belongs to the KRTAP type 6 family. As to quaternary structure, interacts with hair keratins.

Functionally, in the hair cortex, hair keratin intermediate filaments are embedded in an interfilamentous matrix, consisting of hair keratin-associated proteins (KRTAP), which are essential for the formation of a rigid and resistant hair shaft through their extensive disulfide bond cross-linking with abundant cysteine residues of hair keratins. The matrix proteins include the high-sulfur and high-glycine-tyrosine keratins. The chain is Keratin-associated protein 6-1 (KRTAP6-1) from Homo sapiens (Human).